A 37-amino-acid polypeptide reads, in one-letter code: Potassium channel toxin alpha-KTx 1.4 (37 aa).

Cystine bridges form between Cys7–Cys28, Cys13–Cys33, and Cys17–Cys35.

Belongs to the short scorpion toxin superfamily. Potassium channel inhibitor family. Alpha-KTx 01 subfamily. Expressed by the venom gland.

The protein resides in the secreted. Functionally, blocks selectively the high conductance calcium-activated (maxi-K) potassium channels. This chain is Potassium channel toxin alpha-KTx 1.4, found in Centruroides limbatus (Bark scorpion).